The following is a 630-amino-acid chain: Mesothelin (630 aa).

The N-terminal stretch at 1–36 is a signal peptide; the sequence is MALPTARPLLGSCGTPALGSLLFLLFSLGWVQPSRT. An N-linked (GlcNAc...) asparagine glycan is attached at Asn57. Ser200 carries the phosphoserine; by FAM20C modification. Residues 262-286 form a required for megakaryocyte-potentiating factor activity region; it reads SIPQGIVAAWRQRSSRDPSWRQPER. The cysteines at positions 302 and 326 are disulfide-linked. N-linked (GlcNAc...) asparagine glycans are attached at residues Asn388, Asn496, and Asn523. Residue Ser606 is the site of GPI-anchor amidated serine attachment. Residues 607–630 constitute a propeptide, removed in mature form; that stretch reads GTPCLLGPGPVLTVLALLLASTLA.

It belongs to the mesothelin family. Interacts with MUC16. In terms of processing, both MPF and the cleaved form of mesothelin are N-glycosylated. Post-translationally, proteolytically cleaved by a furin-like convertase to generate megakaryocyte-potentiating factor (MPF), and the cleaved form of mesothelin. As to expression, expressed in lung. Expressed at low levels in heart, placenta and kidney. Expressed in mesothelial cells. Highly expressed in mesotheliomas, ovarian cancers, and some squamous cell carcinomas (at protein level).

Its subcellular location is the cell membrane. It is found in the golgi apparatus. The protein localises to the secreted. Its function is as follows. Membrane-anchored forms may play a role in cellular adhesion. Megakaryocyte-potentiating factor (MPF) potentiates megakaryocyte colony formation in vitro. This Homo sapiens (Human) protein is Mesothelin (MSLN).